Reading from the N-terminus, the 135-residue chain is Large ribosomal subunit protein uL16c (135 aa).

The residue at position 1 (Met1) is an N-methylmethionine.

As to quaternary structure, component of the chloroplast large ribosomal subunit (LSU). Mature 70S chloroplast ribosomes of higher plants consist of a small (30S) and a large (50S) subunit. The 30S small subunit contains 1 molecule of ribosomal RNA (16S rRNA) and 24 different proteins. The 50S large subunit contains 3 rRNA molecules (23S, 5S and 4.5S rRNA) and 33 different proteins. Post-translationally, partially alpha-N-monomethylated at Met-1 (10%), whereas 90% of it is blocked to Edman degradation, probably by trimethylation.

The protein localises to the plastid. Its subcellular location is the chloroplast. Functionally, component of the chloroplast ribosome (chloro-ribosome), a dedicated translation machinery responsible for the synthesis of chloroplast genome-encoded proteins, including proteins of the transcription and translation machinery and components of the photosynthetic apparatus. This is Large ribosomal subunit protein uL16c from Spinacia oleracea (Spinach).